A 58-amino-acid chain; its full sequence is uncharacterized protein (58 aa).

The next 2 membrane-spanning stretches (helical) occupy residues 7-27 (IFDIVMYIIFGVLSLFLVAKT) and 29-49 (YGTGVLVFVAILYLAVIAYKI).

Its subcellular location is the cell membrane. This is an uncharacterized protein from Bacillus subtilis (strain 168).